A 388-amino-acid polypeptide reads, in one-letter code: Succinate--CoA ligase [ADP-forming] subunit beta (388 aa).

The 236-residue stretch at 9-244 folds into the ATP-grasp domain; it reads KQLFAEYGLP…PSQEDSREAH (236 aa). Residues Lys46, 53-55, Glu99, Thr102, and Glu107 each bind ATP; that span reads GRG. Residues Asn199 and Asp213 each contribute to the Mg(2+) site. Substrate is bound by residues Asn264 and 321 to 323; that span reads GIV.

It belongs to the succinate/malate CoA ligase beta subunit family. In terms of assembly, heterotetramer of two alpha and two beta subunits. Mg(2+) serves as cofactor.

It carries out the reaction succinate + ATP + CoA = succinyl-CoA + ADP + phosphate. The catalysed reaction is GTP + succinate + CoA = succinyl-CoA + GDP + phosphate. The protein operates within carbohydrate metabolism; tricarboxylic acid cycle; succinate from succinyl-CoA (ligase route): step 1/1. Functionally, succinyl-CoA synthetase functions in the citric acid cycle (TCA), coupling the hydrolysis of succinyl-CoA to the synthesis of either ATP or GTP and thus represents the only step of substrate-level phosphorylation in the TCA. The beta subunit provides nucleotide specificity of the enzyme and binds the substrate succinate, while the binding sites for coenzyme A and phosphate are found in the alpha subunit. The sequence is that of Succinate--CoA ligase [ADP-forming] subunit beta from Pseudoalteromonas translucida (strain TAC 125).